A 325-amino-acid chain; its full sequence is Pyruvate dehydrogenase E1 component subunit beta (325 aa).

A thiamine diphosphate-binding site is contributed by E60.

Heterodimer of an alpha and a beta chain. Requires thiamine diphosphate as cofactor.

The enzyme catalyses N(6)-[(R)-lipoyl]-L-lysyl-[protein] + pyruvate + H(+) = N(6)-[(R)-S(8)-acetyldihydrolipoyl]-L-lysyl-[protein] + CO2. In terms of biological role, the pyruvate dehydrogenase complex catalyzes the overall conversion of pyruvate to acetyl-CoA and CO(2). It contains multiple copies of three enzymatic components: pyruvate dehydrogenase (E1), dihydrolipoamide acetyltransferase (E2) and lipoamide dehydrogenase (E3). The chain is Pyruvate dehydrogenase E1 component subunit beta (pdhB) from Staphylococcus epidermidis (strain ATCC 35984 / DSM 28319 / BCRC 17069 / CCUG 31568 / BM 3577 / RP62A).